Here is a 338-residue protein sequence, read N- to C-terminus: MSPEEELQSNVSVASSSPTSNCISRNTLGGLKEHNYLGLSDCSSVGSSTLSPLAEDDKATISLKATELTLGLPGSQSPARDTELNLLSPAKLDEKPFFPLLPSKDEICSSSQKNNASGNKRGFSDTMDQFAEAKSSVYTEKNWMFPEAAATQSVTKKDVPQNIPKGQSSTTNNSSSPPAAKAQIVGWPPVRSYRKNTLATTCKNSDEVDGRPGSGALFVKVSMDGAPYLRKVDLRSYTNYGELSSALEKMFTTFTLGQCGSNGAAGKDMLSETKLKDLLNGKDYVLTYEDKDGDWMLVGDVPWEMFIDVCKKLKIMKGCDAIGLAAAPRAMEKSKMRA.

The interval 1–25 (MSPEEELQSNVSVASSSPTSNCISR) is disordered. Over residues 9 to 21 (SNVSVASSSPTSN) the composition is skewed to low complexity. The short motif at 68–72 (LTLGL) is the EAR-like (transcriptional repression) element. The tract at residues 150–186 (ATQSVTKKDVPQNIPKGQSSTTNNSSSPPAAKAQIVG) is disordered. Residues 168 to 180 (SSTTNNSSSPPAA) show a composition bias toward low complexity. The PB1 domain occupies 216 to 318 (ALFVKVSMDG…VCKKLKIMKG (103 aa)).

The protein belongs to the Aux/IAA family. As to quaternary structure, homodimers and heterodimers. Interacts with TPL. Post-translationally, phosphorylated by phytochrome A in vitro. In terms of tissue distribution, highly expressed in the whole plant.

Its subcellular location is the nucleus. In terms of biological role, aux/IAA proteins are short-lived transcriptional factors that function as repressors of early auxin response genes at low auxin concentrations. Repression is thought to result from the interaction with auxin response factors (ARFs), proteins that bind to the auxin-responsive promoter element (AuxRE). Formation of heterodimers with ARF proteins may alter their ability to modulate early auxin response genes expression. This chain is Auxin-responsive protein IAA9 (IAA9), found in Arabidopsis thaliana (Mouse-ear cress).